The sequence spans 373 residues: Chaperone protein DnaJ (373 aa).

Residues 5 to 70 enclose the J domain; sequence DYYELLEVDR…EKRALYDQYG (66 aa). The CR-type zinc-finger motif lies at 134–211; sequence GTQKEVHYSF…CSGKGYRIEK (78 aa). Zn(2+) is bound by residues Cys-147, Cys-150, Cys-163, Cys-166, Cys-185, Cys-188, Cys-199, and Cys-202. CXXCXGXG motif repeat units follow at residues 147 to 154, 163 to 170, 185 to 192, and 199 to 206; these read CSACKGTG, CPECHGRG, CPRCHGQG, and CEECSGKG.

This sequence belongs to the DnaJ family. Homodimer. Requires Zn(2+) as cofactor.

It localises to the cytoplasm. Functionally, participates actively in the response to hyperosmotic and heat shock by preventing the aggregation of stress-denatured proteins and by disaggregating proteins, also in an autonomous, DnaK-independent fashion. Unfolded proteins bind initially to DnaJ; upon interaction with the DnaJ-bound protein, DnaK hydrolyzes its bound ATP, resulting in the formation of a stable complex. GrpE releases ADP from DnaK; ATP binding to DnaK triggers the release of the substrate protein, thus completing the reaction cycle. Several rounds of ATP-dependent interactions between DnaJ, DnaK and GrpE are required for fully efficient folding. Also involved, together with DnaK and GrpE, in the DNA replication of plasmids through activation of initiation proteins. This chain is Chaperone protein DnaJ, found in Nitratiruptor sp. (strain SB155-2).